A 243-amino-acid polypeptide reads, in one-letter code: Isoprenyl transferase 2 (243 aa).

Asp-23 is a catalytic residue. Asp-23 serves as a coordination point for Mg(2+). Substrate is bound by residues 24–27, Trp-28, Arg-36, His-40, and 68–70; these read GNGR and STE. Asn-71 functions as the Proton acceptor in the catalytic mechanism. Residues Trp-72, Arg-74, Arg-191, and 197–199 contribute to the substrate site; that span reads RTS. Glu-210 contacts Mg(2+).

This sequence belongs to the UPP synthase family. In terms of assembly, homodimer. Mg(2+) is required as a cofactor.

Its function is as follows. Catalyzes the condensation of isopentenyl diphosphate (IPP) with allylic pyrophosphates generating different type of terpenoids. The chain is Isoprenyl transferase 2 from Corynebacterium efficiens (strain DSM 44549 / YS-314 / AJ 12310 / JCM 11189 / NBRC 100395).